A 292-amino-acid polypeptide reads, in one-letter code: Acetylglutamate kinase (292 aa).

Substrate contacts are provided by residues 64-65, Arg86, and Asn190; that span reads GG.

The protein belongs to the acetylglutamate kinase family. ArgB subfamily.

It is found in the cytoplasm. It carries out the reaction N-acetyl-L-glutamate + ATP = N-acetyl-L-glutamyl 5-phosphate + ADP. It functions in the pathway amino-acid biosynthesis; L-arginine biosynthesis; N(2)-acetyl-L-ornithine from L-glutamate: step 2/4. Functionally, catalyzes the ATP-dependent phosphorylation of N-acetyl-L-glutamate. The polypeptide is Acetylglutamate kinase (Trichlorobacter lovleyi (strain ATCC BAA-1151 / DSM 17278 / SZ) (Geobacter lovleyi)).